The sequence spans 444 residues: Adenylosuccinate lyase (444 aa).

Residues 9–10, 73–75, and 97–98 each bind N(6)-(1,2-dicarboxyethyl)-AMP; these read RY, KHD, and TS. Histidine 145 functions as the Proton donor/acceptor in the catalytic mechanism. A N(6)-(1,2-dicarboxyethyl)-AMP-binding site is contributed by glutamine 219. Serine 269 acts as the Proton donor/acceptor in catalysis. Residues serine 270, 275–277, asparagine 283, and 314–318 contribute to the N(6)-(1,2-dicarboxyethyl)-AMP site; these read KRN and SAERI.

This sequence belongs to the lyase 1 family. Adenylosuccinate lyase subfamily. In terms of assembly, homotetramer. Residues from neighboring subunits contribute catalytic and substrate-binding residues to each active site.

The enzyme catalyses N(6)-(1,2-dicarboxyethyl)-AMP = fumarate + AMP. The catalysed reaction is (2S)-2-[5-amino-1-(5-phospho-beta-D-ribosyl)imidazole-4-carboxamido]succinate = 5-amino-1-(5-phospho-beta-D-ribosyl)imidazole-4-carboxamide + fumarate. It functions in the pathway purine metabolism; AMP biosynthesis via de novo pathway; AMP from IMP: step 2/2. Its pathway is purine metabolism; IMP biosynthesis via de novo pathway; 5-amino-1-(5-phospho-D-ribosyl)imidazole-4-carboxamide from 5-amino-1-(5-phospho-D-ribosyl)imidazole-4-carboxylate: step 2/2. Functionally, catalyzes two reactions in de novo purine nucleotide biosynthesis. Catalyzes the breakdown of 5-aminoimidazole- (N-succinylocarboxamide) ribotide (SAICAR or 2-[5-amino-1-(5-phospho-beta-D-ribosyl)imidazole-4-carboxamido]succinate) to 5-aminoimidazole-4-carboxamide ribotide (AICAR or 5-amino-1-(5-phospho-beta-D-ribosyl)imidazole-4-carboxamide) and fumarate, and of adenylosuccinate (ADS or N(6)-(1,2-dicarboxyethyl)-AMP) to adenosine monophosphate (AMP) and fumarate. The protein is Adenylosuccinate lyase (purB) of Archaeoglobus fulgidus (strain ATCC 49558 / DSM 4304 / JCM 9628 / NBRC 100126 / VC-16).